The following is a 316-amino-acid chain: Haloacid dehalogenase-like hydrolase domain-containing protein At4g39970 (316 aa).

A chloroplast-targeting transit peptide spans 1–46 (MAVSCNHSAILFSPSSTAGSSSVTSSSSLIGFPRFQTLRFKSRSVY). The Nucleophile role is filled by Asp-69. Mg(2+) contacts are provided by Asp-69, Asp-71, and Asp-259. The Proton donor role is filled by Asp-71.

This sequence belongs to the HAD-like hydrolase superfamily. DOG/GPP family. It depends on Mg(2+) as a cofactor.

The protein localises to the plastid. The protein resides in the chloroplast. This Arabidopsis thaliana (Mouse-ear cress) protein is Haloacid dehalogenase-like hydrolase domain-containing protein At4g39970.